An 819-amino-acid polypeptide reads, in one-letter code: Protein kinase C-binding protein NELL2 (819 aa).

The first 24 residues, 1–24 (MHAMESRVLLRTFCVILGLEAVWG), serve as a signal peptide directing secretion. N-linked (GlcNAc...) asparagine glycosylation is found at Asn56, Asn228, Asn296, and Asn301. The Laminin G-like domain maps to 58–231 (TKAFLFQDSP…AQCPDLNRTC (174 aa)). One can recognise a VWFC 1 domain in the interval 275–334 (RTCTMKGTTYREFESWTDGCKNCTCLNGTIQCETLVCPAPDCPAKSAPAYVDGKCCKECK). Residues 400–442 (GYDFCSEKHTCMENSVCRNLNDRAVCSCRDGFRALREDNAYCE) form the EGF-like 1 domain. 3 cysteine pairs are disulfide-bonded: Cys404/Cys416, Cys410/Cys425, and Cys427/Cys441. The Ca(2+) site is built by Asp443, Ile444, and Glu446. The 42-residue stretch at 443 to 484 (DIDECAEGRHYCRENTMCVNTPGSFLCICQTGYIRIDDYSCT) folds into the EGF-like 2; calcium-binding domain. Intrachain disulfides connect Cys447-Cys460, Cys454-Cys469, Cys471-Cys483, Cys489-Cys502, Cys496-Cys511, Cys513-Cys524, Cys528-Cys538, Cys532-Cys544, and Cys546-Cys555. Residues Asn462, Thr463, and Ser466 each contribute to the Ca(2+) site. An EGF-like 3; calcium-binding domain is found at 485-525 (EHDECLTNQHNCDENALCFNTVGGHNCVCKPGYTGNGTTCK). N-linked (GlcNAc...) asparagine glycosylation occurs at Asn520. The EGF-like 4 domain occupies 526–556 (AFCKDGCRNGGACIAANVCACPQGFTGPSCE). The O-linked (GlcNAc...) threonine glycan is linked to Thr551. Ca(2+)-binding residues include Asp558, Ile559, and Glu561. One can recognise an EGF-like 5; calcium-binding domain in the interval 558-604 (DIDECSEGFVQCDSRANCINLPGWYHCECRDGYHDNGMFAPGGESCE). Intrachain disulfides connect Cys562/Cys575, Cys569/Cys584, and Cys586/Cys603. Residues Asn577, Leu578, and Trp581 each contribute to the Ca(2+) site. Ca(2+) is bound by residues Asp605, Ile606, and Glu608. Residues 605–640 (DIDECGTGRHSCANDTICFNLDGGYDCRCPHGKNCT) form the EGF-like 6; calcium-binding domain. 3 cysteine pairs are disulfide-bonded: Cys609/Cys622, Cys616/Cys631, and Cys633/Cys639. An N-linked (GlcNAc...) asparagine glycan is attached at Asn618. Ca(2+) contacts are provided by Asn624, Leu625, and Gly628. The N-linked (GlcNAc...) asparagine glycan is linked to Asn638. VWFC domains follow at residues 641-696 (GDCV…PECD) and 701-759 (SQCL…PRCV).

In terms of assembly, homotrimer. Binds to PRKCB. Interacts with NICOL1; this interaction triggers epididymal differentiation. As to quaternary structure, binds to PRKCB. Widely expressed. Expressed in cortical astrocytes but not in neuron. As to expression, widely expressed in brain. High expression is observed in telencephalic and diencephalic glutamatergic neurons, while no expression is found in GABAergic and GNRH neurons.

It localises to the secreted. The protein resides in the cytoplasm. Its function is as follows. Plays multiple roles In neural tissues, regulates neuronal proliferation, survival, differentiation, polarization, as well as axon guidance and synaptic functions. Plays an important role in axon development during neuronal differentiation through the MAPK intracellular signaling pathway. Via binding to its receptor ROBO3, plays a role in axon guidance, functioning as a repulsive axon guidance cue that contributes to commissural axon guidance to the midline. Required for neuron survival through the modulation of MAPK signaling pathways too. Involved in the regulation of hypothalamic GNRH secretion and the control of puberty. Epididymal-secreted protein that signals through a ROS1-pathway to regulate the epididymal initial segment (IS) maturation, sperm maturation and male fertility. In terms of biological role, acts as an endogenous inhibitor of PRKCB in glia. This is Protein kinase C-binding protein NELL2 (Nell2) from Rattus norvegicus (Rat).